We begin with the raw amino-acid sequence, 606 residues long: MACPF domain-containing protein At4g24290 (606 aa).

The region spanning 1 to 332 is the MACPF domain; sequence MALRLPASKA…PPIEELHQFL (332 aa).

Belongs to the complement C6/C7/C8/C9 (TC 1.C.39) family.

Negatively controls the salicylic acid (SA)-mediated pathway of programmed cell death in plant immunity. The sequence is that of MACPF domain-containing protein At4g24290 from Arabidopsis thaliana (Mouse-ear cress).